Consider the following 283-residue polypeptide: Pantothenate synthetase (283 aa).

30–37 (MGALHEGH) serves as a coordination point for ATP. H37 acts as the Proton donor in catalysis. Q61 lines the (R)-pantoate pocket. Q61 provides a ligand contact to beta-alanine. 147–150 (GEKD) lines the ATP pocket. Q153 lines the (R)-pantoate pocket. ATP contacts are provided by residues V176 and 184 to 187 (VSSR).

Belongs to the pantothenate synthetase family. As to quaternary structure, homodimer.

Its subcellular location is the cytoplasm. The catalysed reaction is (R)-pantoate + beta-alanine + ATP = (R)-pantothenate + AMP + diphosphate + H(+). Its pathway is cofactor biosynthesis; (R)-pantothenate biosynthesis; (R)-pantothenate from (R)-pantoate and beta-alanine: step 1/1. Catalyzes the condensation of pantoate with beta-alanine in an ATP-dependent reaction via a pantoyl-adenylate intermediate. The protein is Pantothenate synthetase of Chlorobium luteolum (strain DSM 273 / BCRC 81028 / 2530) (Pelodictyon luteolum).